The sequence spans 496 residues: Cyclin-L1 (496 aa).

2 cyclin-like regions span residues 68–170 (ELIQ…RILK) and 183–267 (KIIV…TTLR). A disordered region spans residues 301–496 (NPDGTPAILS…SHSGHGRHRR (196 aa)). Over residues 322–347 (SPRDVKTEEKSPNFAKVKREMDDKQS) the composition is skewed to basic and acidic residues. Basic residues-rich tracts occupy residues 358–392 (ENKRSRSVSRSRSRTKSRSRSHSPRRHYNNRRRSR), 412–426 (RRHHNHGSPHMKLKH), 434–446 (RHAHKRKKSHSPS), and 456–468 (KKHRHEHGHHRER). The tract at residues 363–406 (RSVSRSRSRTKSRSRSHSPRRHYNNRRRSRSGTYSSRSRSRSRS) is RS. Residues 469-478 (RERSRSFERS) are compositionally biased toward basic and acidic residues. The segment covering 479–496 (HKNKHHGSSHSGHGRHRR) has biased composition (basic residues).

This sequence belongs to the cyclin family. Cyclin L subfamily.

It is found in the nucleus speckle. Its subcellular location is the nucleus. The protein resides in the nucleoplasm. Its function is as follows. Involved in pre-mRNA splicing. In Xenopus laevis (African clawed frog), this protein is Cyclin-L1 (ccnl1).